The primary structure comprises 102 residues: MAIGLEHYLTVAAILFTLGIFGIFLNRKNVIVILMSIELMLLAVNINLVAFSTHLGDLAGQVFALFVLTVAAAEAAIGLAILVVFFRNRGSIAVEDINMMKG.

3 consecutive transmembrane segments (helical) span residues 5-25 (LEHY…GIFL), 31-51 (IVIL…LVAF), and 66-86 (FVLT…VVFF).

This sequence belongs to the complex I subunit 4L family. In terms of assembly, NDH-1 is composed of 14 different subunits. Subunits NuoA, H, J, K, L, M, N constitute the membrane sector of the complex.

It is found in the cell inner membrane. The catalysed reaction is a quinone + NADH + 5 H(+)(in) = a quinol + NAD(+) + 4 H(+)(out). Functionally, NDH-1 shuttles electrons from NADH, via FMN and iron-sulfur (Fe-S) centers, to quinones in the respiratory chain. The immediate electron acceptor for the enzyme in this species is believed to be ubiquinone. Couples the redox reaction to proton translocation (for every two electrons transferred, four hydrogen ions are translocated across the cytoplasmic membrane), and thus conserves the redox energy in a proton gradient. This chain is NADH-quinone oxidoreductase subunit K, found in Parvibaculum lavamentivorans (strain DS-1 / DSM 13023 / NCIMB 13966).